The sequence spans 392 residues: Formate-dependent phosphoribosylglycinamide formyltransferase (392 aa).

N(1)-(5-phospho-beta-D-ribosyl)glycinamide contacts are provided by residues E22 to L23 and E82. Residues R114, K155, S160–Q165, E195–V198, and E203 contribute to the ATP site. The ATP-grasp domain occupies R119–L308. The Mg(2+) site is built by E267 and E279. Residues D286, K355, and R362–R363 contribute to the N(1)-(5-phospho-beta-D-ribosyl)glycinamide site.

Belongs to the PurK/PurT family. As to quaternary structure, homodimer.

The enzyme catalyses N(1)-(5-phospho-beta-D-ribosyl)glycinamide + formate + ATP = N(2)-formyl-N(1)-(5-phospho-beta-D-ribosyl)glycinamide + ADP + phosphate + H(+). It participates in purine metabolism; IMP biosynthesis via de novo pathway; N(2)-formyl-N(1)-(5-phospho-D-ribosyl)glycinamide from N(1)-(5-phospho-D-ribosyl)glycinamide (formate route): step 1/1. Functionally, involved in the de novo purine biosynthesis. Catalyzes the transfer of formate to 5-phospho-ribosyl-glycinamide (GAR), producing 5-phospho-ribosyl-N-formylglycinamide (FGAR). Formate is provided by PurU via hydrolysis of 10-formyl-tetrahydrofolate. This is Formate-dependent phosphoribosylglycinamide formyltransferase from Escherichia coli O157:H7.